The following is a 474-amino-acid chain: ATP synthase subunit beta (474 aa).

151–158 serves as a coordination point for ATP; that stretch reads GGAGVGKT.

Belongs to the ATPase alpha/beta chains family. F-type ATPases have 2 components, CF(1) - the catalytic core - and CF(0) - the membrane proton channel. CF(1) has five subunits: alpha(3), beta(3), gamma(1), delta(1), epsilon(1). CF(0) has four main subunits: a(1), b(1), b'(1) and c(9-12).

It localises to the cell inner membrane. It catalyses the reaction ATP + H2O + 4 H(+)(in) = ADP + phosphate + 5 H(+)(out). Produces ATP from ADP in the presence of a proton gradient across the membrane. The catalytic sites are hosted primarily by the beta subunits. The polypeptide is ATP synthase subunit beta (Jannaschia sp. (strain CCS1)).